Consider the following 1004-residue polypeptide: Ephrin type-A receptor 8 (1004 aa).

The N-terminal stretch at 1-26 (MAPARARLSPALWVVTAAAAATCVSA) is a signal peptide. Topologically, residues 27-541 (GRGEVNLLDT…KPRPRYDTRT (515 aa)) are extracellular. In terms of domain architecture, Eph LBD spans 30–208 (EVNLLDTSTI…YYKKCPAMVR (179 aa)). Fibronectin type-III domains are found at residues 327–437 (PPSA…TNQA) and 438–533 (APSQ…TGKP). Residues Asn-339, Asn-406, and Asn-431 are each glycosylated (N-linked (GlcNAc...) asparagine). The helical transmembrane segment at 542–562 (IVWICLTLITGLVVLLLLLIC) threads the bilayer. The interval 563-569 (KKRHCGY) is mediates interaction with ANKS1A and ANKS1B. Residues 563–1004 (KKRHCGYSKA…SSTQGPRRHL (442 aa)) are Cytoplasmic-facing. The tract at residues 588 to 643 (APPPVFLPLNHPPGKFPETQFSAEPHTYEEPGRAGRSFTREIEASRIHIEKIIGSG) is mediates interaction with PIK3CG and required for endocytosis. Phosphotyrosine; by autocatalysis is present on Tyr-615. One can recognise a Protein kinase domain in the interval 634-895 (IHIEKIIGSG…HVVSVLDALV (262 aa)). ATP is bound by residues 640–648 (IGSGESGEV) and Lys-666. Asp-759 acts as the Proton acceptor in catalysis. Residue Tyr-838 is modified to Phosphotyrosine; by autocatalysis. The 65-residue stretch at 929–993 (NGDLTVGDWL…LGSIQTMRAQ (65 aa)) folds into the SAM domain. The PDZ-binding motif lies at 1002–1004 (RHL).

It belongs to the protein kinase superfamily. Tyr protein kinase family. Ephrin receptor subfamily. As to quaternary structure, heterotetramer upon binding of the ligand. The heterotetramer is composed of an ephrin dimer and a receptor dimer. Oligomerization is probably required to induce biological responses. May also form heterodimers with other ephrin receptors. Interacts with FYN; possible downstream effector of EPHA8 in regulation of cell adhesion. Interacts with PIK3CG; regulates integrin-mediated cell adhesion to substrate. Interacts with TIAM1; regulates clathrin-mediated endocytosis of EPHA8. Interacts with ANKS1A and ANKS1B; EPHA8 kinase activity-independent but stimulated by EPHA8 ubiquitination. Phosphorylated. Phosphorylation is stimulated upon binding of its ligands including EFNA2, EFNA3 and EFNA5. Autophosphorylation on Tyr-615 is critical for association with FYN. Autophosphorylation on Tyr-838 modulates tyrosine kinase activity. In terms of processing, ubiquitinated. Ubiquitination by CBL regulates the receptor stability and activity through proteasomal degradation. ANKS1A prevents ubiquitination and degradation. In terms of tissue distribution, specifically expressed in the central nervous system.

The protein resides in the cell membrane. Its subcellular location is the cell projection. The protein localises to the early endosome membrane. It catalyses the reaction L-tyrosyl-[protein] + ATP = O-phospho-L-tyrosyl-[protein] + ADP + H(+). Its function is as follows. Receptor tyrosine kinase which binds promiscuously GPI-anchored ephrin-A family ligands residing on adjacent cells, leading to contact-dependent bidirectional signaling into neighboring cells. The signaling pathway downstream of the receptor is referred to as forward signaling while the signaling pathway downstream of the ephrin ligand is referred to as reverse signaling. The GPI-anchored ephrin-A EFNA2, EFNA3, and EFNA5 are able to activate EPHA8 through phosphorylation. With EFNA5 may regulate integrin-mediated cell adhesion and migration on fibronectin substrate but also neurite outgrowth. During development of the nervous system also plays a role in axon guidance. Downstream effectors of the EPHA8 signaling pathway include FYN which promotes cell adhesion upon activation by EPHA8 and the MAP kinases in the stimulation of neurite outgrowth. The chain is Ephrin type-A receptor 8 (Epha8) from Mus musculus (Mouse).